A 70-amino-acid chain; its full sequence is Delta-hexatoxin-Mg1b (70 aa).

Residues 1 to 26 form the signal peptide; the sequence is MKILEKALLENDSAAEEESRNLRTKR. Disulfide bonds link Cys27–Cys41, Cys34–Cys46, Cys40–Cys57, and Cys42–Cys68.

Expressed by the venom gland.

It localises to the secreted. Its function is as follows. Inhibits tetrodotoxin-sensitive sodium channels (Nav). Intracranial injection into mice causes strong convulsions and death. Intrathorax injection into crickets causes paralysis prolonged for 2 minutes, followed by recovery. This chain is Delta-hexatoxin-Mg1b, found in Macrothele gigas (Japanese funnel web spider).